The sequence spans 168 residues: Luminal-binding protein 3 (168 aa).

N120 carries an N-linked (GlcNAc...) asparagine glycan. The tract at residues 148-168 (QRSGGASGGSSSSEEDGHDEL) is disordered. The Prevents secretion from ER motif lies at 165 to 168 (HDEL).

This sequence belongs to the heat shock protein 70 family.

It is found in the endoplasmic reticulum lumen. In terms of biological role, probably plays a role in facilitating the assembly of multimeric protein complexes inside the ER. The protein is Luminal-binding protein 3 (BIP3) of Nicotiana tabacum (Common tobacco).